Consider the following 198-residue polypeptide: MICOS complex subunit MIC26 (198 aa).

The first 25 residues, methionine 1–serine 25, serve as a signal peptide directing secretion. Residues proline 108–alanine 128 form a helical membrane-spanning segment. Serine 162 carries an O-linked (Xyl...) (chondroitin sulfate) serine glycan.

This sequence belongs to the apolipoprotein O/MICOS complex subunit Mic27 family. Component of the mitochondrial contact site and cristae organizing system (MICOS) complex, composed of at least MICOS10/MIC10, CHCHD3/MIC19, CHCHD6/MIC25, APOOL/MIC27, IMMT/MIC60, APOO/MIC23/MIC26 and MICOS13/MIC13. This complex was also known under the names MINOS or MitOS complex. The MICOS complex associates with mitochondrial outer membrane proteins SAMM50, MTX1 and MTX2 (together described as components of the mitochondrial outer membrane sorting assembly machinery (SAM) complex) and DNAJC11, mitochondrial inner membrane protein TMEM11 and with HSPA9. The MICOS and SAM complexes together with DNAJC11 are part of a large protein complex spanning both membranes termed the mitochondrial intermembrane space bridging (MIB) complex. Interacts with IMMT/MIC60. Interacts with MICOS10/MIC10 and APOOL/MIC27. O-glycosylation; glycosaminoglycan of chondroitin-sulfate type.

It is found in the mitochondrion inner membrane. Its subcellular location is the secreted. The protein resides in the mitochondrion. The protein localises to the endoplasmic reticulum membrane. It localises to the golgi apparatus membrane. Functionally, component of the MICOS complex, a large protein complex of the mitochondrial inner membrane that plays crucial roles in the maintenance of crista junctions, inner membrane architecture, and formation of contact sites to the outer membrane. Plays a crucial role in crista junction formation and mitochondrial function. Can induce cardiac lipotoxicity by enhancing mitochondrial respiration and fatty acid metabolism in cardiac myoblasts. Promotes cholesterol efflux from macrophage cells. Detected in HDL, LDL and VLDL. Secreted by a microsomal triglyceride transfer protein (MTTP)-dependent mechanism, probably as a VLDL-associated protein that is subsequently transferred to HDL. The sequence is that of MICOS complex subunit MIC26 (APOO) from Bos taurus (Bovine).